The following is a 248-amino-acid chain: Probable transcriptional regulatory protein Mpop_0922 (248 aa).

Belongs to the TACO1 family.

It is found in the cytoplasm. This is Probable transcriptional regulatory protein Mpop_0922 from Methylorubrum populi (strain ATCC BAA-705 / NCIMB 13946 / BJ001) (Methylobacterium populi).